A 467-amino-acid chain; its full sequence is Gustatory and odorant receptor 22 (467 aa).

Residues 1 to 106 (MIHTQMEDAQ…MPRTTFTWCS (106 aa)) are Cytoplasmic-facing. Residues 107 to 127 (KAFLWAYFIYACETVIVLVVA) traverse the membrane as a helical segment. Topologically, residues 128 to 144 (RERINKFISTSDKRFDE) are extracellular. The helical transmembrane segment at 145–165 (VIYNIIFMSIMVPHFLLPVAS) threads the bilayer. The Cytoplasmic portion of the chain corresponds to 166–198 (WRNGSEVAKFKNMWTDFQYKYLIVTGKPIVFPK). The chain crosses the membrane as a helical span at residues 199 to 219 (LYPITWTLCIVSWSLSLVIIL). The Extracellular segment spans residues 220 to 238 (SQYYLQPDFQFCHTFAYYH). Residues 239 to 259 (IIAMLNGFCSLWFVNCTAFGT) form a helical membrane-spanning segment. Over 260-304 (ASKAFAKELTDVLATERPAAKLTEYRHLWVDLSHMMQQLGKAYSN) the chain is Cytoplasmic. A helical transmembrane segment spans residues 305–325 (MYGIYCLVIFFTTIIATYGSL). The Extracellular portion of the chain corresponds to 326–337 (SEIIEHGATYKE). Residues 338 to 358 (VGLFVIVFYCMSLLFIICNEA) form a helical membrane-spanning segment. The Cytoplasmic portion of the chain corresponds to 359 to 414 (HHASKRVGLNFQERLLNVNLTAVDKATQKEVEMFLVAIDKNPPTMNLDGYANINRG). Residues 415 to 435 (LITSNISFMATYLVVLMQFKL) form a helical membrane-spanning segment. The Extracellular portion of the chain corresponds to 436-467 (TLLRQSAKNAFISALKANLSRIRSLDADKVNT). Residue asparagine 453 is glycosylated (N-linked (GlcNAc...) asparagine).

This sequence belongs to the insect chemoreceptor superfamily. Gustatory receptor (GR) family. Gr21a subfamily. Carbon dioxide-responsive neurons coexpress GPRgr22 and GPRgr24 in the maxillary palp at both larval and adult life stages.

Its subcellular location is the cell membrane. Gustatory receptor which mediates acceptance or avoidance behavior, depending on its substrates. GPRgr22 and GPRgr24 together are sufficient for olfactory carbon dioxide-chemosensation. The polypeptide is Gustatory and odorant receptor 22 (Anopheles gambiae (African malaria mosquito)).